The following is a 366-amino-acid chain: Ferredoxin--NADP reductase (366 aa).

FAD contacts are provided by Asp-51, Gln-59, Tyr-64, Val-104, Phe-139, Asp-308, and Thr-349.

Belongs to the ferredoxin--NADP reductase type 2 family. In terms of assembly, homodimer. Requires FAD as cofactor.

It carries out the reaction 2 reduced [2Fe-2S]-[ferredoxin] + NADP(+) + H(+) = 2 oxidized [2Fe-2S]-[ferredoxin] + NADPH. The polypeptide is Ferredoxin--NADP reductase (Methylibium petroleiphilum (strain ATCC BAA-1232 / LMG 22953 / PM1)).